The following is a 280-amino-acid chain: uncharacterized protein (280 aa).

Disordered stretches follow at residues 1–83 and 248–280; these read MELK…EEEQ and IRHR…EARL. A compositionally biased stretch (polar residues) spans 12–25; sequence SAKTDNHTVYQNSP. Composition is skewed to basic and acidic residues over residues 41-71 and 249-280; these read KQTR…RVDD and RHRE…EARL.

It belongs to the chlamydial CPn_0705/CT_671/TC_0042 family.

This is an uncharacterized protein from Chlamydia pneumoniae (Chlamydophila pneumoniae).